A 142-amino-acid polypeptide reads, in one-letter code: Small ribosomal subunit protein bS6 (142 aa).

The disordered stretch occupies residues 103 to 142 (KAAESREQRAPRGEDRPARVVADDVDDSDDDTDDEDSNDE). Residues 105-124 (AESREQRAPRGEDRPARVVA) are compositionally biased toward basic and acidic residues. Acidic residues predominate over residues 125–142 (DDVDDSDDDTDDEDSNDE).

It belongs to the bacterial ribosomal protein bS6 family.

In terms of biological role, binds together with bS18 to 16S ribosomal RNA. The chain is Small ribosomal subunit protein bS6 from Hahella chejuensis (strain KCTC 2396).